A 598-amino-acid polypeptide reads, in one-letter code: Arylsulfatase J (598 aa).

An N-terminal signal peptide occupies residues 1–47; it reads MAPRDSAEPLPPLSPQAWAWSGKFLAMGALAGFSVLSLLTYGYLCWG. Ca(2+)-binding residues include Asp82, Asp83, and Cys120. Cys120 serves as the catalytic Nucleophile. 3-oxoalanine (Cys) is present on Cys120. A glycan (N-linked (GlcNAc...) asparagine) is linked at Asn155. Substrate is bound at residue Lys174. His176 is an active-site residue. His267 lines the substrate pocket. Residues Asn304 and Asn316 are each glycosylated (N-linked (GlcNAc...) asparagine). The Ca(2+) site is built by Asp325 and Asn326. Lys343 contacts substrate. N-linked (GlcNAc...) asparagine glycans are attached at residues Asn429, Asn495, Asn525, and Asn563. Residues 532-598 are disordered; that stretch reads RYPPKDPRSN…IKCHPSVATG (67 aa). Residues 559–583 show a composition bias toward basic residues; that stretch reads KKKSNKTKAKKMQKKKSKARMRKQL.

This sequence belongs to the sulfatase family. The cofactor is Ca(2+). The conversion to 3-oxoalanine (also known as C-formylglycine, FGly), of a serine or cysteine residue in prokaryotes and of a cysteine residue in eukaryotes, is critical for catalytic activity.

The protein localises to the secreted. The chain is Arylsulfatase J (Arsj) from Mus musculus (Mouse).